A 304-amino-acid chain; its full sequence is Glycine--tRNA ligase alpha subunit (304 aa).

This sequence belongs to the class-II aminoacyl-tRNA synthetase family. Tetramer of two alpha and two beta subunits.

Its subcellular location is the cytoplasm. The catalysed reaction is tRNA(Gly) + glycine + ATP = glycyl-tRNA(Gly) + AMP + diphosphate. The sequence is that of Glycine--tRNA ligase alpha subunit from Streptococcus agalactiae serotype III (strain NEM316).